An 843-amino-acid chain; its full sequence is Tetratricopeptide repeat protein 7B (843 aa).

The stretch at 97–131 (QESNLIMAKLNYVEGDYKEALNIYARVGLDDLPLT) is one TPR 1 repeat. Serine 160 and serine 202 each carry phosphoserine. TPR repeat units lie at residues 219 to 252 (ETGLQRAHVLYFKNGNLTRGVGRFRELLRAVETR), 363 to 396 (SVVYDLLTIALGRRGQYEMLSECLERAMKFAFEE), 397 to 430 (FHLWYQFALSLMAAGKSARAVKVLKECIRLKPDD), 479 to 514 (TYSLQATDASLRGMQEVLQRKALLAFQRAHSLSPTD), 516 to 548 (QAAFYLALQLAISRQIPEALGYVRQALQLQGDD), and 549 to 582 (ANSLHLLALLLSAQKHYHDALNIIDMALSEYPEN). 7 positions are modified to phosphoserine: serine 625, serine 629, serine 630, serine 673, serine 677, serine 678, and serine 681. TPR repeat units lie at residues 696–729 (AQIWLHAAEVYIGIGKPAEATACTQEAANLFPMS), 730–763 (HNVLYMRGQIAELRGSMDEARRWYEEALAISPTH), 765–797 (KSMQRLALILHQLGRYSLAEKILRDAVQVNSTA), and 798–831 (HEVWNGLGEVLQAQGNDAAATECFLTALELEASS).

Component of a phosphatidylinositol 4-kinase (PI4K) complex, composed of PI4KA, EFR3 (EFR3A or EFR3B), TTC7 (TTC7A or TTC7B) and HYCC (HYCC1 or HYCC2). Interacts with PI4KA, interaction is direct. Interacts with EFR3 (EFR3A or EFR3B), interaction is direct. Interacts with HYCC (HYCC1 or HYCC2), interaction is direct. Association with the PI4K complex is strongly reduced by TMEM150A.

The protein resides in the cytoplasm. It localises to the cytosol. It is found in the cell membrane. Its function is as follows. Component of a complex required to localize phosphatidylinositol 4-kinase (PI4K) to the plasma membrane. The complex acts as a regulator of phosphatidylinositol 4-phosphate (PtdIns(4)P) synthesis. In the complex, plays a central role in bridging PI4KA to EFR3B and HYCC1, via direct interactions. The sequence is that of Tetratricopeptide repeat protein 7B (TTC7B) from Homo sapiens (Human).